Reading from the N-terminus, the 484-residue chain is 6-phosphogluconate dehydrogenase, decarboxylating (484 aa).

NADP(+)-binding positions include 10–15, 33–35, 75–77, and asparagine 103; these read GLAVMG, NRT, and IKA. Substrate-binding positions include asparagine 103 and 129-131; that span reads SGG. The active-site Proton acceptor is the lysine 183. 186-187 contributes to the substrate binding site; it reads HN. The active-site Proton donor is the glutamate 190. 5 residues coordinate substrate: tyrosine 191, lysine 260, arginine 287, arginine 448, and histidine 454.

Belongs to the 6-phosphogluconate dehydrogenase family. In terms of assembly, homodimer.

It carries out the reaction 6-phospho-D-gluconate + NADP(+) = D-ribulose 5-phosphate + CO2 + NADPH. The protein operates within carbohydrate degradation; pentose phosphate pathway; D-ribulose 5-phosphate from D-glucose 6-phosphate (oxidative stage): step 3/3. Catalyzes the oxidative decarboxylation of 6-phosphogluconate to ribulose 5-phosphate and CO(2), with concomitant reduction of NADP to NADPH. The protein is 6-phosphogluconate dehydrogenase, decarboxylating of Caenorhabditis elegans.